The sequence spans 281 residues: Putative phosphatase MPN_264 (281 aa).

Residue Asp-8 is the Nucleophile of the active site. Mg(2+) is bound at residue Asp-8. Residue Leu-9 coordinates phosphate. Asp-10 serves as a coordination point for Mg(2+). Phosphate-binding positions include 44 to 45 and Lys-205; that span reads TG. Residues Asp-228 and Ser-229 each coordinate Mg(2+). Asn-231 contacts phosphate.

Belongs to the HAD-like hydrolase superfamily. Cof family. Requires Mg(2+) as cofactor.

The protein is Putative phosphatase MPN_264 of Mycoplasma pneumoniae (strain ATCC 29342 / M129 / Subtype 1) (Mycoplasmoides pneumoniae).